Here is a 257-residue protein sequence, read N- to C-terminus: Phosphate import ATP-binding protein PstB (257 aa).

An ABC transporter domain is found at 11–252 (IQVRDLNFYY…PAKKQTEDYI (242 aa)). 43–50 (GPSGCGKS) lines the ATP pocket.

This sequence belongs to the ABC transporter superfamily. Phosphate importer (TC 3.A.1.7) family. In terms of assembly, the complex is composed of two ATP-binding proteins (PstB), two transmembrane proteins (PstC and PstA) and a solute-binding protein (PstS).

It is found in the cell inner membrane. The catalysed reaction is phosphate(out) + ATP + H2O = ADP + 2 phosphate(in) + H(+). Its function is as follows. Part of the ABC transporter complex PstSACB involved in phosphate import. Responsible for energy coupling to the transport system. The sequence is that of Phosphate import ATP-binding protein PstB from Salmonella paratyphi A (strain ATCC 9150 / SARB42).